A 334-amino-acid polypeptide reads, in one-letter code: Ornithine carbamoyltransferase (334 aa).

Carbamoyl phosphate contacts are provided by residues 56–59 (STRT), Gln-83, Arg-107, and 134–137 (HPTQ). L-ornithine-binding positions include Asn-168, Asp-232, and 236–237 (SM). Carbamoyl phosphate-binding positions include 274–275 (CL) and Arg-320.

The protein belongs to the aspartate/ornithine carbamoyltransferase superfamily. OTCase family.

Its subcellular location is the cytoplasm. The enzyme catalyses carbamoyl phosphate + L-ornithine = L-citrulline + phosphate + H(+). The protein operates within amino-acid biosynthesis; L-arginine biosynthesis; L-arginine from L-ornithine and carbamoyl phosphate: step 1/3. In terms of biological role, reversibly catalyzes the transfer of the carbamoyl group from carbamoyl phosphate (CP) to the N(epsilon) atom of ornithine (ORN) to produce L-citrulline. The protein is Ornithine carbamoyltransferase of Shigella sonnei (strain Ss046).